We begin with the raw amino-acid sequence, 209 residues long: ATP synthase subunit delta (209 aa).

It belongs to the ATPase delta chain family. In terms of assembly, F-type ATPases have 2 components, F(1) - the catalytic core - and F(0) - the membrane proton channel. F(1) has five subunits: alpha(3), beta(3), gamma(1), delta(1), epsilon(1). F(0) has three main subunits: a(1), b(2) and c(10-14). The alpha and beta chains form an alternating ring which encloses part of the gamma chain. F(1) is attached to F(0) by a central stalk formed by the gamma and epsilon chains, while a peripheral stalk is formed by the delta and b chains.

The protein resides in the cell inner membrane. Functionally, f(1)F(0) ATP synthase produces ATP from ADP in the presence of a proton or sodium gradient. F-type ATPases consist of two structural domains, F(1) containing the extramembraneous catalytic core and F(0) containing the membrane proton channel, linked together by a central stalk and a peripheral stalk. During catalysis, ATP synthesis in the catalytic domain of F(1) is coupled via a rotary mechanism of the central stalk subunits to proton translocation. In terms of biological role, this protein is part of the stalk that links CF(0) to CF(1). It either transmits conformational changes from CF(0) to CF(1) or is implicated in proton conduction. This chain is ATP synthase subunit delta, found in Psychrobacter sp. (strain PRwf-1).